A 331-amino-acid polypeptide reads, in one-letter code: Mycothiol acetyltransferase (331 aa).

E33 is a 1D-myo-inositol 2-(L-cysteinylamino)-2-deoxy-alpha-D-glucopyranoside binding site. Low complexity predominate over residues H59–A86. A disordered region spans residues H59–A89. R115 to S120 lines the acetyl-CoA pocket. Residues L183–G331 enclose the N-acetyltransferase domain. E210, K249, and E261 together coordinate 1D-myo-inositol 2-(L-cysteinylamino)-2-deoxy-alpha-D-glucopyranoside. Residue V265–T267 participates in acetyl-CoA binding. Residue Y299 participates in 1D-myo-inositol 2-(L-cysteinylamino)-2-deoxy-alpha-D-glucopyranoside binding. Acetyl-CoA is bound at residue N304–R309.

The protein belongs to the acetyltransferase family. MshD subfamily. As to quaternary structure, monomer.

The enzyme catalyses 1D-myo-inositol 2-(L-cysteinylamino)-2-deoxy-alpha-D-glucopyranoside + acetyl-CoA = mycothiol + CoA + H(+). In terms of biological role, catalyzes the transfer of acetyl from acetyl-CoA to desacetylmycothiol (Cys-GlcN-Ins) to form mycothiol. This is Mycothiol acetyltransferase from Brachybacterium faecium (strain ATCC 43885 / DSM 4810 / JCM 11609 / LMG 19847 / NBRC 14762 / NCIMB 9860 / 6-10).